A 148-amino-acid chain; its full sequence is MASKSGSGGLREPPNEQAVLNMYEGKRSELSQIYSNITDLEMQVSEHSLVINAIQPLDQSRKCFRMIGGVLVERTIKEVLPAVQRNKDGLEEVVRKLYETLEKKKKDLTEFEAKYKIRITKQEDNKEGGNKKEGNAQGVLVGAASSSQ.

Residues 87–114 (KDGLEEVVRKLYETLEKKKKDLTEFEAK) are a coiled coil. Basic and acidic residues predominate over residues 122–134 (QEDNKEGGNKKEG). Positions 122 to 148 (QEDNKEGGNKKEGNAQGVLVGAASSSQ) are disordered.

It belongs to the prefoldin subunit beta family. Heterohexamer of two PFD-alpha type and four PFD-beta type subunits forming prefoldin co-chaperone complex. Interacts with LSM8, a specific subunit of the LSM2-8 complex, which is a core component of the spliceosome.

The protein localises to the cytoplasm. The protein resides in the nucleus. Binds specifically to cytosolic chaperonin (c-CPN) and transfers target proteins to it. Binds to nascent polypeptide chain and promotes folding in an environment in which there are many competing pathways for nonnative proteins. Together with other chaperonins, contribute to the regulation of gene expression by modulating the spliceosome function on pre-mRNA splicing post-transcriptionally by acting as a co-chaperone of Hsp90 to control levels of LSM8. Required for microtubules (MTs) organization and dynamicity. Involved in the process leading to microtubules dissociation in response to gibberellic acid (GA) probably due to the DELLA proteins-mediated translocation of the prefoldin co-chaperone complex from the cytoplasm to the nucleus. This is Prefoldin subunit 2 from Arabidopsis thaliana (Mouse-ear cress).